The sequence spans 514 residues: RNA polymerase sigma factor SigA (514 aa).

Residues 135–159 (AAKKATAKKAAAKKTTAKKTAAKKS) are compositionally biased toward basic residues. The tract at residues 135-205 (AAKKATAKKA…SDDDEDDAPA (71 aa)) is disordered. Residues 281-351 (LLEANLRLVV…TRAMADQART (71 aa)) are sigma-70 factor domain-2. The Interaction with polymerase core subunit RpoC signature appears at 305 to 308 (DLIQ). The tract at residues 360 to 436 (EVINKLARVQ…DSEAVVPADA (77 aa)) is sigma-70 factor domain-3. The tract at residues 449–502 (VLDTLSEREAGVVSMRFGLTDGQPKTLDEIGKVYGVTRERIRQIESKTMSKLRH) is sigma-70 factor domain-4. The H-T-H motif DNA-binding region spans 475–494 (LDEIGKVYGVTRERIRQIES).

This sequence belongs to the sigma-70 factor family. RpoD/SigA subfamily. Interacts transiently with the RNA polymerase catalytic core.

The protein localises to the cytoplasm. Sigma factors are initiation factors that promote the attachment of RNA polymerase to specific initiation sites and are then released. This sigma factor is the primary sigma factor during exponential growth. The sequence is that of RNA polymerase sigma factor SigA from Streptomyces griseus.